Reading from the N-terminus, the 310-residue chain is Protein YIP5 (310 aa).

The disordered stretch occupies residues M1 to L84. Over residues D10–G22 the composition is skewed to acidic residues. Over residues D35–K57 the composition is skewed to polar residues. Residue S60 is modified to Phosphoserine. 5 helical membrane-spanning segments follow: residues T131–S151, L181–V201, L220–I240, T249–L269, and S290–F310.

It belongs to the YIP1 family. In terms of assembly, interacts with SNX3, TVP18, TVP23, YIP1 and YIP4. Interacts with SEC4; The C-terminal cysteines in the Rab GTPase SEC4 are essential for the interaction. Interacts with YPT1, YPT6, YPT7, YPT10, YPT11, YPT31, YPT32 and YPT52; These proteins are all Rab GTPases.

It is found in the membrane. Functionally, possible role in vesicle-mediated transport. May be involved in proper membrane localization of Rab GTPases. This chain is Protein YIP5 (YIP5), found in Saccharomyces cerevisiae (strain ATCC 204508 / S288c) (Baker's yeast).